A 595-amino-acid polypeptide reads, in one-letter code: Chaperone protein HscA homolog (595 aa).

It belongs to the heat shock protein 70 family.

Chaperone involved in the maturation of iron-sulfur cluster-containing proteins. Has a low intrinsic ATPase activity which is markedly stimulated by HscB. In Rickettsia africae (strain ESF-5), this protein is Chaperone protein HscA homolog.